Here is a 242-residue protein sequence, read N- to C-terminus: Proteasome subunit alpha (242 aa).

Belongs to the peptidase T1A family. As to quaternary structure, the 20S proteasome core is composed of 14 alpha and 14 beta subunits that assemble into four stacked heptameric rings, resulting in a barrel-shaped structure. The two inner rings, each composed of seven catalytic beta subunits, are sandwiched by two outer rings, each composed of seven alpha subunits. The catalytic chamber with the active sites is on the inside of the barrel. Has a gated structure, the ends of the cylinder being occluded by the N-termini of the alpha-subunits. Is capped at one or both ends by the proteasome regulatory ATPase, PAN.

The protein localises to the cytoplasm. The formation of the proteasomal ATPase PAN-20S proteasome complex, via the docking of the C-termini of PAN into the intersubunit pockets in the alpha-rings, triggers opening of the gate for substrate entry. Interconversion between the open-gate and close-gate conformations leads to a dynamic regulation of the 20S proteasome proteolysis activity. Its function is as follows. Component of the proteasome core, a large protease complex with broad specificity involved in protein degradation. This chain is Proteasome subunit alpha, found in Sulfurisphaera tokodaii (strain DSM 16993 / JCM 10545 / NBRC 100140 / 7) (Sulfolobus tokodaii).